We begin with the raw amino-acid sequence, 232 residues long: Phosphoglycolate phosphatase (232 aa).

Residue Asp8 is the Nucleophile of the active site. Asp8 and Asp10 together coordinate Mg(2+). Substrate is bound at residue Lys156. The Mg(2+) site is built by Asp179 and Asp183.

Belongs to the archaeal SPP-like hydrolase family. The cofactor is Mg(2+).

The enzyme catalyses 2-phosphoglycolate + H2O = glycolate + phosphate. Catalyzes the dephosphorylation of 2-phosphoglycolate. The polypeptide is Phosphoglycolate phosphatase (Methanopyrus kandleri (strain AV19 / DSM 6324 / JCM 9639 / NBRC 100938)).